The chain runs to 77 residues: Small ribosomal subunit protein uS4 (77 aa).

The tract at residues 45–77 is disordered; that stretch reads PFGGGRPGRVKRKNQKAAAKKASGGDGDEEDEE. The segment covering 52–63 has biased composition (basic residues); that stretch reads GRVKRKNQKAAA.

It belongs to the universal ribosomal protein uS4 family.

The protein is Small ribosomal subunit protein uS4 (RPS9) of Nicotiana tabacum (Common tobacco).